The primary structure comprises 410 residues: Peptidase T (410 aa).

Residue His79 coordinates Zn(2+). Residue Asp81 is part of the active site. Asp142 lines the Zn(2+) pocket. Glu176 (proton acceptor) is an active-site residue. Residues Glu177, Asp199, and His381 each contribute to the Zn(2+) site.

The protein belongs to the peptidase M20B family. Requires Zn(2+) as cofactor.

The protein localises to the cytoplasm. It catalyses the reaction Release of the N-terminal residue from a tripeptide.. Cleaves the N-terminal amino acid of tripeptides. The chain is Peptidase T from Bacillus thuringiensis subsp. konkukian (strain 97-27).